The following is a 451-amino-acid chain: Probable beta-1,4-xylosyltransferase GT43E (451 aa).

Residues Met1–Arg88 lie on the Cytoplasmic side of the membrane. A helical; Signal-anchor for type II membrane protein transmembrane segment spans residues Leu89–Phe109. The Lumenal segment spans residues Ser110 to Thr451. Residues Asn260 and Asn366 are each glycosylated (N-linked (GlcNAc...) asparagine).

This sequence belongs to the glycosyltransferase 43 family.

The protein resides in the golgi apparatus membrane. Its function is as follows. Probable beta-1,4-xylosyltransferase involved in xylan biosynthesis in cell walls. This chain is Probable beta-1,4-xylosyltransferase GT43E, found in Oryza sativa subsp. japonica (Rice).